Reading from the N-terminus, the 209-residue chain is Uracil phosphoribosyltransferase (209 aa).

Residues arginine 79, arginine 104, and 131 to 139 (DPMLATGVS) contribute to the 5-phospho-alpha-D-ribose 1-diphosphate site. Uracil-binding positions include isoleucine 194 and 199 to 201 (GDA). Aspartate 200 is a 5-phospho-alpha-D-ribose 1-diphosphate binding site.

Belongs to the UPRTase family. Mg(2+) is required as a cofactor.

The enzyme catalyses UMP + diphosphate = 5-phospho-alpha-D-ribose 1-diphosphate + uracil. The protein operates within pyrimidine metabolism; UMP biosynthesis via salvage pathway; UMP from uracil: step 1/1. With respect to regulation, allosterically activated by GTP. Catalyzes the conversion of uracil and 5-phospho-alpha-D-ribose 1-diphosphate (PRPP) to UMP and diphosphate. The polypeptide is Uracil phosphoribosyltransferase (Thermotoga petrophila (strain ATCC BAA-488 / DSM 13995 / JCM 10881 / RKU-1)).